The primary structure comprises 107 residues: MGNRQSSAQLNSHLTHINSQNSNLFISDSKTAVFHTQHILLAAGVGIIATLLVLLLCSCVLNCYLCRRLKRTNGVSSLLERNLRQNGSSAKIYVKPVMQSSTIIEEA.

The chain crosses the membrane as a helical span at residues 39–59 (ILLAAGVGIIATLLVLLLCSC).

This sequence belongs to the rotavirus B NSP1-1 family.

The protein localises to the host membrane. This is Non-structural protein 1, peptide 1 from Homo sapiens (Human).